The following is a 180-amino-acid chain: Putative manganese efflux pump MntP (180 aa).

6 helical membrane-spanning segments follow: residues 6-26 (LFAL…GIGI), 34-54 (IALI…LGWY), 67-87 (ASIA…WDTI), 103-123 (GGLL…GFTL), 130-150 (LVLA…AGLT), and 159-179 (IGER…VKLF).

It belongs to the MntP (TC 9.B.29) family.

It is found in the cell membrane. Its function is as follows. Probably functions as a manganese efflux pump. The sequence is that of Putative manganese efflux pump MntP from Desulforamulus reducens (strain ATCC BAA-1160 / DSM 100696 / MI-1) (Desulfotomaculum reducens).